The sequence spans 386 residues: Cytotoxic granule associated RNA binding protein TIA1 (386 aa).

M1 is subject to N-acetylmethionine. RRM domains are found at residues K7 to T83, F106 to R184, and C214 to E286. A disordered region spans residues G355–A376.

In terms of assembly, homooligomer; homooligomerization is induced by Zn(2+). Interacts with FASTK; the interactions leads to its phosphorylation. Interacts (via RRM1 and the C-terminal glutamine-rich (Q) sequence) with SNRPC/U1-C (via N-terminus); thereby facilitating spliceosomal U1 snRNP recruitment to 5' splice sites. Phosphorylatedby FASTK; phosphorylation occurs after FAS ligation in FAS-mediated apoptosis and before DNA fragmentation.

Its subcellular location is the nucleus. The protein localises to the cytoplasm. It localises to the stress granule. RNA-binding protein involved in the regulation of alternative pre-RNA splicing and mRNA translation by binding to uridine-rich (U-rich) RNA sequences. Binds to U-rich sequences immediately downstream from a 5' splice sites in a uridine-rich small nuclear ribonucleoprotein (U snRNP)-dependent fashion, thereby modulating alternative pre-RNA splicing. Preferably binds to the U-rich IAS1 sequence in a U1 snRNP-dependent manner; this binding is optimal if a 5' splice site is adjacent to IAS1. Activates the use of heterologous 5' splice sites; the activation depends on the intron sequence downstream from the 5' splice site, with a preference for a downstream U-rich sequence. By interacting with SNRPC/U1-C, promotes recruitment and binding of spliceosomal U1 snRNP to 5' splice sites followed by U-rich sequences, thereby facilitating atypical 5' splice site recognition by U1 snRNP. Activates splicing of alternative exons with weak 5' splice sites followed by a U-rich stretch on its own pre-mRNA and on TIAR mRNA. Acts as a modulator of alternative splicing for the apoptotic FAS receptor, thereby promoting apoptosis. Binds to the 5' splice site region of FAS intron 5 to promote accumulation of transcripts that include exon 6 at the expense of transcripts in which exon 6 is skipped, thereby leading to the transcription of a membrane-bound apoptotic FAS receptor, which promotes apoptosis. Binds to a conserved AU-rich cis element in COL2A1 intron 2 and modulates alternative splicing of COL2A1 exon 2. Also binds to the equivalent AT-rich element in COL2A1 genomic DNA, and may thereby be involved in the regulation of transcription. Involved in the repression of mRNA translation by binding to AU-rich elements (AREs) located in mRNA 3' untranslated regions (3' UTRs), including target ARE-bearing mRNAs encoding TNF and PTGS2. Also participates in the cellular response to environmental stress, by acting downstream of the stress-induced phosphorylation of EIF2S1/EIF2A to promote the recruitment of untranslated mRNAs to cytoplasmic stress granules (SGs), leading to stress-induced translational arrest. Formation and recruitment to SGs is regulated by Zn(2+). Possesses nucleolytic activity against cytotoxic lymphocyte target cells. The polypeptide is Cytotoxic granule associated RNA binding protein TIA1 (Tia1) (Mus musculus (Mouse)).